A 587-amino-acid polypeptide reads, in one-letter code: Beta-(1--&gt;2)glucan export ATP-binding/permease protein NdvA (587 aa).

The ABC transmembrane type-1 domain maps to 21-301 (VSLVVIANIV…MRQFATQIFE (281 aa)). A run of 6 helical transmembrane segments spans residues 23-43 (LVVIANIVLATITIAEPILFG), 57-77 (PILFMWAAFAVFNTVAFVLVS), 126-146 (LFGLWLEFMRNHLSTVIALAL), 158-178 (LSAVLIVLGIAYWLIGRVVMS), 248-268 (MASTIAMMVVLIIGTMLVQSG), and 272-292 (IGDVIAFIGFANLLIARLDLM). The 235-residue stretch at 335–569 (IEFRDVSFGF…NGRFAALLRA (235 aa)) folds into the ABC transporter domain. 368-375 (GPTGAGKT) is an ATP binding site.

It belongs to the ABC transporter superfamily. Beta-(1--&gt;2)glucan exporter (TC 3.A.1.108.1) family. Homodimer.

It is found in the cell inner membrane. The enzyme catalyses [(1-&gt;2)-beta-D-glucosyl](n)(in) + ATP + H2O = [(1-&gt;2)-beta-D-glucosyl](n)(out) + ADP + phosphate + H(+). Functionally, involved in beta-(1--&gt;2)glucan export. Transmembrane domains (TMD) form a pore in the inner membrane and the ATP-binding domain (NBD) is responsible for energy generation. The chain is Beta-(1--&gt;2)glucan export ATP-binding/permease protein NdvA from Rhizobium etli (strain ATCC 51251 / DSM 11541 / JCM 21823 / NBRC 15573 / CFN 42).